Consider the following 269-residue polypeptide: GRF-interacting factor 10 (269 aa).

The interval 1-71 (MTAEGEAKNP…GEKDDGACRD (71 aa)) is disordered. A compositionally biased stretch (low complexity) spans 22–43 (QQAAPAPAPAQGEVAQEAAVQG). Residues 47-69 (EQERDKADREVQGGAGEKDDGAC) are compositionally biased toward basic and acidic residues. Positions 113–148 (AFTAMQLQELEQQSRVYQYMAARVPVPTHLVFPVWK) constitute a QLQ domain. A WRC domain is found at 179-223 (EPEPGRCRRTDGKKWRCWRNTIPNEKYCERHMHRGRKRPVQVFLE). 2 consecutive short sequence motifs (bipartite nuclear localization signal) follow at residues 184 to 194 (RCRRTDGKKWR) and 212 to 216 (RGRKR). The disordered stretch occupies residues 217 to 269 (PVQVFLEDDEPDSASGSKPAAPGKATEGAKKADDKSPSSKKLAVAAPAAVQST). Residues 243–253 (EGAKKADDKSP) are compositionally biased toward basic and acidic residues.

Belongs to the GRF family. As to quaternary structure, interacts with GIF1. As to expression, highly expressed in shoots. Expressed in developing leaves.

Its subcellular location is the nucleus. In terms of biological role, involved in the regulation of cell proliferation in developing shoots and leaves. Does not possess transactivation activity. This is GRF-interacting factor 10 from Zea mays (Maize).